Reading from the N-terminus, the 118-residue chain is MSSKNTIISQLEAEQMSKEIPEFAPGDTVTVSVKVVEGSRERLQAFEGVVIAKRNRGLNSSFTVRKVSYGVGVERTFQTHSRLVDSINVKRRGDVRKAKLYHLRDLSGKAARIKEKLD.

The protein belongs to the bacterial ribosomal protein bL19 family.

Functionally, this protein is located at the 30S-50S ribosomal subunit interface and may play a role in the structure and function of the aminoacyl-tRNA binding site. The polypeptide is Large ribosomal subunit protein bL19 (Hahella chejuensis (strain KCTC 2396)).